The following is a 480-amino-acid chain: Bifunctional pantoate ligase/cytidylate kinase (480 aa).

A pantoate--beta-alanine ligase region spans residues 1 to 243; the sequence is MPTMGGLHQG…CGTTRLIDHV (243 aa). 4 to 11 contributes to the ATP binding site; the sequence is MGGLHQGH. His11 serves as the catalytic Proton donor. A (R)-pantoate-binding site is contributed by Gln34. Residue Gln34 coordinates beta-alanine. 123 to 126 is an ATP binding site; it reads GEKD. A (R)-pantoate-binding site is contributed by Gln129. ATP-binding positions include Val152 and 160–163; that span reads LSSR. The segment at 244 to 480 is cytidylate kinase; it reads FLMTRQPLVA…GEEAWPTPAG (237 aa).

The protein in the N-terminal section; belongs to the pantothenate synthetase family. In the C-terminal section; belongs to the cytidylate kinase family. Type 1 subfamily.

The protein resides in the cytoplasm. It catalyses the reaction (R)-pantoate + beta-alanine + ATP = (R)-pantothenate + AMP + diphosphate + H(+). It carries out the reaction CMP + ATP = CDP + ADP. The enzyme catalyses dCMP + ATP = dCDP + ADP. It participates in cofactor biosynthesis; (R)-pantothenate biosynthesis; (R)-pantothenate from (R)-pantoate and beta-alanine: step 1/1. Catalyzes the condensation of pantoate with beta-alanine in an ATP-dependent reaction via a pantoyl-adenylate intermediate. Its function is as follows. Catalyzes the transfer of a phosphate group from ATP to either CMP or dCMP to form CDP or dCDP and ADP, respectively. The polypeptide is Bifunctional pantoate ligase/cytidylate kinase (Synechococcus sp. (strain CC9605)).